The following is a 174-amino-acid chain: ATP synthase subunit b (174 aa).

Residues 9-29 (LPNTSLIFWEVVTFLILLALL) form a helical membrane-spanning segment.

This sequence belongs to the ATPase B chain family. In terms of assembly, F-type ATPases have 2 components, F(1) - the catalytic core - and F(0) - the membrane proton channel. F(1) has five subunits: alpha(3), beta(3), gamma(1), delta(1), epsilon(1). F(0) has three main subunits: a(1), b(2) and c(10-14). The alpha and beta chains form an alternating ring which encloses part of the gamma chain. F(1) is attached to F(0) by a central stalk formed by the gamma and epsilon chains, while a peripheral stalk is formed by the delta and b chains.

Its subcellular location is the cell membrane. Its function is as follows. F(1)F(0) ATP synthase produces ATP from ADP in the presence of a proton or sodium gradient. F-type ATPases consist of two structural domains, F(1) containing the extramembraneous catalytic core and F(0) containing the membrane proton channel, linked together by a central stalk and a peripheral stalk. During catalysis, ATP synthesis in the catalytic domain of F(1) is coupled via a rotary mechanism of the central stalk subunits to proton translocation. Component of the F(0) channel, it forms part of the peripheral stalk, linking F(1) to F(0). The sequence is that of ATP synthase subunit b from Rubrobacter xylanophilus (strain DSM 9941 / JCM 11954 / NBRC 16129 / PRD-1).